The chain runs to 887 residues: Valine--tRNA ligase (887 aa).

A 'HIGH' region motif is present at residues 48 to 58 (PNVTGVLHVGH). The short motif at 527–531 (KMSKS) is the 'KMSKS' region element. Lys530 is a binding site for ATP. Positions 814–887 (LAGLVDIEAE…EASDRLKKLS (74 aa)) form a coiled coil.

Belongs to the class-I aminoacyl-tRNA synthetase family. ValS type 1 subfamily. Monomer.

It is found in the cytoplasm. The catalysed reaction is tRNA(Val) + L-valine + ATP = L-valyl-tRNA(Val) + AMP + diphosphate. Catalyzes the attachment of valine to tRNA(Val). As ValRS can inadvertently accommodate and process structurally similar amino acids such as threonine, to avoid such errors, it has a 'posttransfer' editing activity that hydrolyzes mischarged Thr-tRNA(Val) in a tRNA-dependent manner. This is Valine--tRNA ligase from Desulfotalea psychrophila (strain LSv54 / DSM 12343).